The following is an 84-amino-acid chain: Large ribosomal subunit protein bL27 (84 aa).

The tract at residues 1-21 is disordered; the sequence is MAHKKGGGSTKNGRDSNPKYL.

This sequence belongs to the bacterial ribosomal protein bL27 family.

This is Large ribosomal subunit protein bL27 from Chlorobium phaeovibrioides (strain DSM 265 / 1930) (Prosthecochloris vibrioformis (strain DSM 265)).